A 282-amino-acid polypeptide reads, in one-letter code: sn-glycerol-3-phosphate transport system permease protein UgpE (282 aa).

A run of 6 helical transmembrane segments spans residues 14–34, 86–106, 112–132, 146–168, 201–221, and 248–268; these read LILI…FVAS, MAIA…IVFF, MFFF…RILP, YAGL…QFFL, IAAL…WPLL, and WNYV…VVVL. An ABC transmembrane type-1 domain is found at 78–269; it reads LWNSFVVAMA…IPPILVVVLM (192 aa).

It belongs to the binding-protein-dependent transport system permease family. The complex is composed of two ATP-binding proteins (UgpC), two transmembrane proteins (UgpA and UgpE) and a solute-binding protein (UgpB).

It localises to the cell inner membrane. Its function is as follows. Part of the ABC transporter complex UgpBAEC involved in sn-glycerol-3-phosphate (G3P) import. Probably responsible for the translocation of the substrate across the membrane. The chain is sn-glycerol-3-phosphate transport system permease protein UgpE (ugpE) from Brucella melitensis biotype 1 (strain ATCC 23456 / CCUG 17765 / NCTC 10094 / 16M).